A 190-amino-acid polypeptide reads, in one-letter code: UPF0301 protein PSPPH_0476 (190 aa).

This sequence belongs to the UPF0301 (AlgH) family.

The polypeptide is UPF0301 protein PSPPH_0476 (Pseudomonas savastanoi pv. phaseolicola (strain 1448A / Race 6) (Pseudomonas syringae pv. phaseolicola (strain 1448A / Race 6))).